We begin with the raw amino-acid sequence, 345 residues long: tRNA N6-adenosine threonylcarbamoyltransferase (345 aa).

2 residues coordinate Fe cation: histidine 111 and histidine 115. Residues 136–140 (LVSGG), aspartate 169, glycine 182, and asparagine 279 each bind substrate. Aspartate 307 contributes to the Fe cation binding site.

It belongs to the KAE1 / TsaD family. Requires Fe(2+) as cofactor.

The protein localises to the cytoplasm. The catalysed reaction is L-threonylcarbamoyladenylate + adenosine(37) in tRNA = N(6)-L-threonylcarbamoyladenosine(37) in tRNA + AMP + H(+). Its function is as follows. Required for the formation of a threonylcarbamoyl group on adenosine at position 37 (t(6)A37) in tRNAs that read codons beginning with adenine. Is involved in the transfer of the threonylcarbamoyl moiety of threonylcarbamoyl-AMP (TC-AMP) to the N6 group of A37, together with TsaE and TsaB. TsaD likely plays a direct catalytic role in this reaction. The chain is tRNA N6-adenosine threonylcarbamoyltransferase from Actinobacillus succinogenes (strain ATCC 55618 / DSM 22257 / CCUG 43843 / 130Z).